The chain runs to 231 residues: MVDSLRACVFDAYGTLLDVHSAVMRNADEVGASAEALSMLWRQRQLEYSWTRTLMHQYADFWQLTDEALTFALRTYHLEDRKGLKDRLMSAYKELSAYPDAAETLEKLKSAGYIVAILSNGNDEMLQAALKASKLDRVLDSCLSADDLKIYKPDPRIYQFACDRLGVNPNEVCFVSSNAWDLGGAGKFGFNTVRINRQGNPPEYEFAPLKHQVNSLSELWPLLAKNVTKAA.

D11 acts as the Nucleophile in catalysis. An (S)-2-haloacid is bound by residues 12 to 13 (AY), R42, and 119 to 120 (SN). The important for catalytic activity stretch occupies residues 176–181 (SSNAWD).

This sequence belongs to the HAD-like hydrolase superfamily. S-2-haloalkanoic acid dehalogenase family.

The catalysed reaction is an (S)-2-haloacid + H2O = a (2R)-2-hydroxycarboxylate + a halide anion + H(+). The enzyme catalyses (S)-2-chloropropanoate + H2O = (R)-lactate + chloride + H(+). In terms of biological role, catalyzes the hydrolytic dehalogenation of small (S)-2-haloalkanoic acids to yield the corresponding (R)-2-hydroxyalkanoic acids. Acts on acids of short chain lengths, C(2) to C(4), with inversion of configuration at C-3. Active with 2-halogenated carboxylic acids and converts only the S-isomer (or L-isomer) of 2-chloropropionic acid with inversion of configuration to produce R-lactate (or D-isomer). The protein is (S)-2-haloacid dehalogenase 4A of Burkholderia cepacia (Pseudomonas cepacia).